The chain runs to 178 residues: Prion-like protein doppel (178 aa).

A signal peptide spans 1 to 25; the sequence is MRKHLGGCWLAIVCVLLFSQLSSVK. A flexible tail region spans residues 27–50; the sequence is RGIKHRIKWNRKVLPSTSQVTEAH. The segment at 51–154 is globular; sequence TAEIRPGAFI…KHCDFWLERG (104 aa). 2 disulfides stabilise this stretch: Cys-94–Cys-147 and Cys-108–Cys-142. Asn-98 and Asn-110 each carry an N-linked (GlcNAc...) asparagine glycan. Residues 124–141 form a cu(2+) binding region; sequence KQDNKLYQRVLWQLIREL. A lipid anchor (GPI-anchor amidated glycine) is attached at Gly-154. The propeptide at 155-178 is removed in mature form; sequence AGLQVTLDQPMMLCLLVFIWFIVK.

Belongs to the prion family. N-glycosylated. Post-translationally, O-glycosylated. Strongly expressed in testis. Detected at low levels in lymph node, spleen and ovary.

It localises to the cell membrane. In terms of biological role, required for normal acrosome reaction and for normal male fertility. Can bind Cu(2+). The protein is Prion-like protein doppel (PRND) of Ovis aries (Sheep).